A 362-amino-acid polypeptide reads, in one-letter code: Oxygen-dependent coproporphyrinogen-III oxidase (362 aa).

Residue Ser-118 coordinates substrate. A divalent metal cation contacts are provided by His-122 and His-132. The active-site Proton donor is the His-132. 134-136 (NYR) contributes to the substrate binding site. The a divalent metal cation site is built by His-166 and His-196. The interval 286–321 (YVEFNLVWDRGTIFGLQTNGRTESILMSLPPLVRWE) is important for dimerization.

Belongs to the aerobic coproporphyrinogen-III oxidase family. In terms of assembly, homodimer. Requires a divalent metal cation as cofactor.

It is found in the cytoplasm. It catalyses the reaction coproporphyrinogen III + O2 + 2 H(+) = protoporphyrinogen IX + 2 CO2 + 2 H2O. The protein operates within porphyrin-containing compound metabolism; protoporphyrin-IX biosynthesis; protoporphyrinogen-IX from coproporphyrinogen-III (O2 route): step 1/1. Its function is as follows. Involved in the heme and chlorophyll biosynthesis. Catalyzes the aerobic oxidative decarboxylation of propionate groups of rings A and B of coproporphyrinogen-III to yield the vinyl groups in protoporphyrinogen-IX. The polypeptide is Oxygen-dependent coproporphyrinogen-III oxidase (Synechococcus sp. (strain CC9605)).